A 900-amino-acid chain; its full sequence is MQLHILNNPKDAALAADAEFLKQSLFNLLHEEASPLVVETVKLLSTSDDSAALIEKVLPQLDEQQTHDLTLACGLFAQILNIAEDVHHERRRQIHEEAGRGGAEGSLTETVRRLKAGKADGKSVQRQLDNTSVTAVLTAHPTEVQRQTVLSFNRRIRALLPQRERCTNADALARLRREIDTILLGLWQTSETRRHKLSVNDEINNGVSIFPMSFFEALPKLYRNMEHDFQMVYPDVCVPNILKIGGWIGGDRDGNPFVSAETLRFAFRRHADAVFRFYRGELDKLYRELPLSIRRVKVNDDVMALAALSPDEELARTEEPYRRAIAYIMARAMGKARALGLGMGCKFGFLEPYASAQEFLDDLKKLQRSLIDNGSRLLAEGRLADLIRSVSVFGFHMMPLDLRQHAGKHADVVAELFQHAGLEDYNSLNEEQKQAVLLRELSHQRPLYSPFITYSDHTRHELAIFNEARKIKDEFGEDAVTQSIISNCEQPSDLLALALLLKESGLLAVENGKPHSRINIVPLFETIEALENACPVMETMFRLDWYDALLESRGNIQEIMLGYSDSNKDGGYVTSSWCLYQAELGLVELFKKYDVRMRLFHGRGGSVGRGGGPSYQAILAQPAGSVAGQIRITEQGEVITAKYADPGNAQRNLETLVAATLEASILPDKKDPDAKLMQALSDVSFKYYRELITHPDFIDYFLQTSPIQEIATLNLGSRPASRKTLARIQDLRAIPWVFSWMQNRLMLPAWYGFGSAVETLCEGNPDTLTALREHAQSNPFFQAMLSNMEQVMAKTDITLAENYAGLSESPDKAKIIFGMIKEEYRRSRKALLDLLQTEELLRDNRSLARSLALRIPYLNALNGLQVAMLKRLRKEPDNPHALLMVHLTINGVAQGLRNTG.

Residues His-140 and Lys-568 contribute to the active site.

The protein belongs to the PEPCase type 1 family. Mg(2+) serves as cofactor.

The catalysed reaction is oxaloacetate + phosphate = phosphoenolpyruvate + hydrogencarbonate. Its function is as follows. Forms oxaloacetate, a four-carbon dicarboxylic acid source for the tricarboxylic acid cycle. This Neisseria meningitidis serogroup C / serotype 2a (strain ATCC 700532 / DSM 15464 / FAM18) protein is Phosphoenolpyruvate carboxylase.